Reading from the N-terminus, the 394-residue chain is uncharacterized protein (394 aa).

It belongs to the mycobacterial PPE family.

This is an uncharacterized protein from Mycobacterium tuberculosis (strain CDC 1551 / Oshkosh).